An 884-amino-acid chain; its full sequence is MSKELSPKYNPAEVEAGRYQTWLDQDVFKPSGDAEAKPYSIVIPPPNVTGKLHLGHAWDTTLQDIIIRQKRMQGFDTLWLPGMDHAGIATQAKVEERLREQGISRYDLGREKFLDKVWEWKDEYAATIKSQWGKMGLSVDYSRERFTLDEGLSKAVRKVFVDLYNRGWIYRGEFIINWDPAARTALSDIEVIHKDVEGAFYHMNYMLEDGSRALEVATTRPETMFGDVAVAVNPEDPRYKDLIGQNVILPIINKPIPIVADEHADPEFGTGVVKITPAHDPNDFAVGQRHNLPQVNVMNDDGTMNELADEFNGMDRFEARKAVVAKLESLGNLVKIEKMTHSVGHSERTGVVVEPRLSTQWFVKMDQLAKNAIANQDTEDKVEFYPPRFNDTFMSWMENVHDWVISRQLWWGHQIPAWYNVNGEMYVGEDAPEGDGWTQDEDVLDTWFSSALWPFSTMGWPDTEAADFKRYFPTSTLVTGYDIIFFWVSRMIFQSLEFTGRQPFSNVLIHGLIRDEEGRKMSKSLGNGIDPMDVIEKYGADALRWFLSNGSAPGQDVRFSYEKMDASWNFINKIWNISRYILMNNEGLTLDQARENVEKVVNSQVGNVTDRWILHNLNETVGKVTENFDKFEFGVAGHILYNFIWEEFANWYVELTKEVLYSDNEDEKVVTRSVLLYTLDQILRLLHPIMPFVTEEIFGQYAEGSIVLASYPQVNATFENQTAHKGVESLKDLIRSVRNSRAEVNVAPSKPITILVKTSDSELESFFKDNSNYIKRFTNPETLEISSAITAPELAMTSIITGAEIFLPLADLLNVEEELARLEKELAKWQKELNMVGKKLSNERFVANAKPEVVQKEKDKQTDYQTKYDATIARIEEMKKINND.

Positions 46–56 (PNVTGKLHLGH) match the 'HIGH' region motif. Residues 520–524 (KMSKS) carry the 'KMSKS' region motif. Lys-523 contacts ATP. Residues 809 to 844 (LADLLNVEEELARLEKELAKWQKELNMVGKKLSNER) are a coiled coil.

Belongs to the class-I aminoacyl-tRNA synthetase family. ValS type 1 subfamily. Monomer.

It is found in the cytoplasm. The catalysed reaction is tRNA(Val) + L-valine + ATP = L-valyl-tRNA(Val) + AMP + diphosphate. Its function is as follows. Catalyzes the attachment of valine to tRNA(Val). As ValRS can inadvertently accommodate and process structurally similar amino acids such as threonine, to avoid such errors, it has a 'posttransfer' editing activity that hydrolyzes mischarged Thr-tRNA(Val) in a tRNA-dependent manner. The chain is Valine--tRNA ligase from Streptococcus agalactiae serotype Ia (strain ATCC 27591 / A909 / CDC SS700).